A 79-amino-acid polypeptide reads, in one-letter code: uncharacterized protein (79 aa).

This is an uncharacterized protein from Methanocaldococcus jannaschii (strain ATCC 43067 / DSM 2661 / JAL-1 / JCM 10045 / NBRC 100440) (Methanococcus jannaschii).